A 97-amino-acid chain; its full sequence is Large ribosomal subunit protein uL23 (97 aa).

Belongs to the universal ribosomal protein uL23 family. As to quaternary structure, part of the 50S ribosomal subunit. Contacts protein L29, and trigger factor when it is bound to the ribosome.

In terms of biological role, one of the early assembly proteins it binds 23S rRNA. One of the proteins that surrounds the polypeptide exit tunnel on the outside of the ribosome. Forms the main docking site for trigger factor binding to the ribosome. This chain is Large ribosomal subunit protein uL23, found in Pelagibacter ubique (strain HTCC1062).